Consider the following 423-residue polypeptide: Serine hydroxymethyltransferase (423 aa).

(6S)-5,6,7,8-tetrahydrofolate-binding positions include Leu125 and 129–131; that span reads GHL. Lys234 is subject to N6-(pyridoxal phosphate)lysine. Residue Glu249 coordinates (6S)-5,6,7,8-tetrahydrofolate.

The protein belongs to the SHMT family. Homodimer. It depends on pyridoxal 5'-phosphate as a cofactor.

Its subcellular location is the cytoplasm. It carries out the reaction (6R)-5,10-methylene-5,6,7,8-tetrahydrofolate + glycine + H2O = (6S)-5,6,7,8-tetrahydrofolate + L-serine. It participates in one-carbon metabolism; tetrahydrofolate interconversion. The protein operates within amino-acid biosynthesis; glycine biosynthesis; glycine from L-serine: step 1/1. Catalyzes the reversible interconversion of serine and glycine with tetrahydrofolate (THF) serving as the one-carbon carrier. This reaction serves as the major source of one-carbon groups required for the biosynthesis of purines, thymidylate, methionine, and other important biomolecules. Also exhibits THF-independent aldolase activity toward beta-hydroxyamino acids, producing glycine and aldehydes, via a retro-aldol mechanism. This Thermobifida fusca (strain YX) protein is Serine hydroxymethyltransferase.